A 390-amino-acid chain; its full sequence is Flagellar P-ring protein (390 aa).

A signal peptide spans Met-1–Ala-25.

It belongs to the FlgI family. In terms of assembly, the basal body constitutes a major portion of the flagellar organelle and consists of four rings (L,P,S, and M) mounted on a central rod.

Its subcellular location is the periplasm. It localises to the bacterial flagellum basal body. In terms of biological role, assembles around the rod to form the L-ring and probably protects the motor/basal body from shearing forces during rotation. This chain is Flagellar P-ring protein, found in Syntrophus aciditrophicus (strain SB).